Reading from the N-terminus, the 224-residue chain is Retinoschisin (224 aa).

Positions 1–23 (MSRKIEGFLLLLLFGYEATLGLS) are cleaved as a signal peptide. The F5/8 type C domain occupies 63–219 (CPYHKPLGFE…IAIRMELLEC (157 aa)). 2 disulfide bridges follow: C63–C219 and C110–C142.

In terms of assembly, homooctamer of 4 homodimers; disulfide-linked. The homooctamer has a flat, cogwheel structure with a diameter of about 14 nm. Two stacked octamers can assemble to form a hexadecamer. In terms of tissue distribution, restricted to the retina (at protein level). Detected in the inner segment of the photoreceptors, the inner nuclear layer, the inner plexiform layer and the ganglion cell layer (at protein level). At the macula, expressed in both the outer and inner nuclear layers and in the inner plexiform layer (at protein level). Detected in retina. Detected only within the photoreceptor cell layer, most prominently within the inner segments of the photoreceptors. Undetectable in the inner plexiform layers and the inner nuclear layer.

Its subcellular location is the secreted. The protein localises to the cell membrane. In terms of biological role, binds negatively charged membrane lipids, such as phosphatidylserine and phosphoinositides. May play a role in cell-cell adhesion processes in the retina, via homomeric interaction between octamers present on the surface of two neighboring cells. Required for normal structure and function of the retina. The protein is Retinoschisin (RS1) of Homo sapiens (Human).